Here is a 198-residue protein sequence, read N- to C-terminus: Protein GrpE (198 aa).

Residues 1–32 (MTTEKETATPADVEVASQEEQIDQTTEAQVEE) are disordered.

It belongs to the GrpE family. In terms of assembly, homodimer.

Its subcellular location is the cytoplasm. Its function is as follows. Participates actively in the response to hyperosmotic and heat shock by preventing the aggregation of stress-denatured proteins, in association with DnaK and GrpE. It is the nucleotide exchange factor for DnaK and may function as a thermosensor. Unfolded proteins bind initially to DnaJ; upon interaction with the DnaJ-bound protein, DnaK hydrolyzes its bound ATP, resulting in the formation of a stable complex. GrpE releases ADP from DnaK; ATP binding to DnaK triggers the release of the substrate protein, thus completing the reaction cycle. Several rounds of ATP-dependent interactions between DnaJ, DnaK and GrpE are required for fully efficient folding. This Haemophilus ducreyi (strain 35000HP / ATCC 700724) protein is Protein GrpE.